The following is a 282-amino-acid chain: Pantothenate synthetase (282 aa).

30 to 37 lines the ATP pocket; that stretch reads MGALHAGH. H37 functions as the Proton donor in the catalytic mechanism. Q61 is a (R)-pantoate binding site. Q61 serves as a coordination point for beta-alanine. 147–150 is a binding site for ATP; the sequence is GEKD. Q153 lines the (R)-pantoate pocket. ATP is bound by residues V176 and 184–187; that span reads LSSR.

It belongs to the pantothenate synthetase family. Homodimer.

The protein localises to the cytoplasm. The enzyme catalyses (R)-pantoate + beta-alanine + ATP = (R)-pantothenate + AMP + diphosphate + H(+). Its pathway is cofactor biosynthesis; (R)-pantothenate biosynthesis; (R)-pantothenate from (R)-pantoate and beta-alanine: step 1/1. Its function is as follows. Catalyzes the condensation of pantoate with beta-alanine in an ATP-dependent reaction via a pantoyl-adenylate intermediate. This chain is Pantothenate synthetase, found in Bacteroides thetaiotaomicron (strain ATCC 29148 / DSM 2079 / JCM 5827 / CCUG 10774 / NCTC 10582 / VPI-5482 / E50).